The sequence spans 525 residues: GMP synthase [glutamine-hydrolyzing] (525 aa).

In terms of domain architecture, Glutamine amidotransferase type-1 spans Arg-9–Leu-207. Residue Cys-86 is the Nucleophile of the active site. Residues His-181 and Glu-183 contribute to the active site. Residues Trp-208–Arg-400 enclose the GMPS ATP-PPase domain. Ser-235–Ser-241 is a binding site for ATP.

As to quaternary structure, homodimer.

The enzyme catalyses XMP + L-glutamine + ATP + H2O = GMP + L-glutamate + AMP + diphosphate + 2 H(+). Its pathway is purine metabolism; GMP biosynthesis; GMP from XMP (L-Gln route): step 1/1. In terms of biological role, catalyzes the synthesis of GMP from XMP. The polypeptide is GMP synthase [glutamine-hydrolyzing] (Pectobacterium carotovorum subsp. carotovorum (strain PC1)).